A 445-amino-acid chain; its full sequence is Ribosomal protein uS12 methylthiotransferase RimO (445 aa).

The 116-residue stretch at 4 to 119 (IKVALVSLGC…LLESIKVFLK (116 aa)) folds into the MTTase N-terminal domain. [4Fe-4S] cluster contacts are provided by Cys13, Cys48, Cys82, Cys156, Cys160, and Cys163. In terms of domain architecture, Radical SAM core spans 142–372 (TTPTYTAYVR…MILQQSISKD (231 aa)). The region spanning 375-441 (KEKIGKTYEV…EYDLIGVVYN (67 aa)) is the TRAM domain.

The protein belongs to the methylthiotransferase family. RimO subfamily. [4Fe-4S] cluster serves as cofactor.

Its subcellular location is the cytoplasm. It carries out the reaction L-aspartate(89)-[ribosomal protein uS12]-hydrogen + (sulfur carrier)-SH + AH2 + 2 S-adenosyl-L-methionine = 3-methylsulfanyl-L-aspartate(89)-[ribosomal protein uS12]-hydrogen + (sulfur carrier)-H + 5'-deoxyadenosine + L-methionine + A + S-adenosyl-L-homocysteine + 2 H(+). Functionally, catalyzes the methylthiolation of an aspartic acid residue of ribosomal protein uS12. The chain is Ribosomal protein uS12 methylthiotransferase RimO from Clostridium botulinum (strain ATCC 19397 / Type A).